Here is a 185-residue protein sequence, read N- to C-terminus: Elongation factor P (185 aa).

Belongs to the elongation factor P family.

The protein resides in the cytoplasm. The protein operates within protein biosynthesis; polypeptide chain elongation. Involved in peptide bond synthesis. Stimulates efficient translation and peptide-bond synthesis on native or reconstituted 70S ribosomes in vitro. Probably functions indirectly by altering the affinity of the ribosome for aminoacyl-tRNA, thus increasing their reactivity as acceptors for peptidyl transferase. This Microcystis aeruginosa (strain NIES-843 / IAM M-2473) protein is Elongation factor P.